The chain runs to 743 residues: NAD(P)H-quinone oxidoreductase subunit 5, chloroplastic (743 aa).

The next 16 membrane-spanning stretches (helical) occupy residues 9 to 29 (WIIP…LLLF), 40 to 60 (WAFQ…NLSI), 89 to 109 (IDPL…LVLI), 125 to 145 (FAYM…SNLI), 147 to 167 (IYIF…FWFT), 185 to 205 (GDFG…SFEF), 219 to 239 (NEVN…GAIA), 258 to 278 (TPIS…FLVA), 283 to 303 (LFIV…ITVF), 327 to 347 (LGYM…FHLI), 354 to 374 (ALLF…VGYC), 396 to 416 (ISFL…CFWS), 425 to 445 (WLYS…TAFY), 548 to 568 (LFPI…GIPF), 607 to 627 (VFSV…YKPV), and 723 to 743 (YLFF…FFNL).

It belongs to the complex I subunit 5 family. NDH is composed of at least 16 different subunits, 5 of which are encoded in the nucleus.

The protein localises to the plastid. It localises to the chloroplast thylakoid membrane. It carries out the reaction a plastoquinone + NADH + (n+1) H(+)(in) = a plastoquinol + NAD(+) + n H(+)(out). It catalyses the reaction a plastoquinone + NADPH + (n+1) H(+)(in) = a plastoquinol + NADP(+) + n H(+)(out). Its function is as follows. NDH shuttles electrons from NAD(P)H:plastoquinone, via FMN and iron-sulfur (Fe-S) centers, to quinones in the photosynthetic chain and possibly in a chloroplast respiratory chain. The immediate electron acceptor for the enzyme in this species is believed to be plastoquinone. Couples the redox reaction to proton translocation, and thus conserves the redox energy in a proton gradient. The sequence is that of NAD(P)H-quinone oxidoreductase subunit 5, chloroplastic (ndhF) from Carthamus tinctorius (Safflower).